A 353-amino-acid polypeptide reads, in one-letter code: Major outer membrane protein (353 aa).

The first 20 residues, 1–20 (MKKTIVALAVAAVAATSANA), serve as a signal peptide directing secretion.

As to quaternary structure, disulfide bond interactions within and between MOMP molecules and other components form high molecular-weight oligomers.

The protein resides in the cell outer membrane. Functionally, structural rigidity of the outer membrane of elementary bodies and porin forming, permitting diffusion of solutes through the intracellular reticulate body membrane. The sequence is that of Major outer membrane protein (ompH) from Pasteurella multocida.